The chain runs to 194 residues: ATP-dependent Clp protease proteolytic subunit (194 aa).

The Nucleophile role is filled by serine 98. Histidine 123 is an active-site residue.

It belongs to the peptidase S14 family. In terms of assembly, fourteen ClpP subunits assemble into 2 heptameric rings which stack back to back to give a disk-like structure with a central cavity, resembling the structure of eukaryotic proteasomes.

Its subcellular location is the cytoplasm. It catalyses the reaction Hydrolysis of proteins to small peptides in the presence of ATP and magnesium. alpha-casein is the usual test substrate. In the absence of ATP, only oligopeptides shorter than five residues are hydrolyzed (such as succinyl-Leu-Tyr-|-NHMec, and Leu-Tyr-Leu-|-Tyr-Trp, in which cleavage of the -Tyr-|-Leu- and -Tyr-|-Trp bonds also occurs).. Functionally, cleaves peptides in various proteins in a process that requires ATP hydrolysis. Has a chymotrypsin-like activity. Plays a major role in the degradation of misfolded proteins. The chain is ATP-dependent Clp protease proteolytic subunit from Clostridium botulinum (strain Loch Maree / Type A3).